Here is a 600-residue protein sequence, read N- to C-terminus: MKVAVIGGGPSGLVTLKYLLAAHHFQPVDPIEVQLFESEDRVGGTFSYRTYDRAELVSSAQLTTFSDYRWHDKSVDYLSAAEYVEYLEGYCDRFGLWPHIRLSTQVEKVERTGKGKHRITVSHDGQTSTWDCDAVAVCSGLHVKPNIPSIPGLDRVPVVFHSSEYKHVRQLGQNTNVMVLGTGETGMDIAYFSVTADSTKSTTVCHRNGFVIGPKRLPEIKLFGRVTSKTPGKALPVDLSRPYLFVNSYVHRKVRGTLQTTLSRWTVKAGSWLVTGTTRGFDQWVGSLPKDKYDESHYFYCKSTKAMPYISAPYRSHSWVHRLRSSIIQAVLPDTGSRKIDLAPWPEYIDEDGVVHFEKNSHPDSKVLLQERRFRPDVLVLATGYTQSFPFLGSDYCTPDHADQRGIWRTGDESVGYIGFVRPSFGAIPPLAEMQVQVWVLNLINRLPGPLVADDSYRLFSNPSGRIEYGVDHDMFAHRLALDIGAAPSFFQALAHGWQVTVFWAMGGTLNTKFRLVGPWAWSGAPRIICDELLDTVTGRRSTIELLTQLIMTAIVCGIPSILLFLADLLVALSIRIYQAISVVSSRPSKGDSAVTENRG.

This sequence belongs to the FMO family. FAD is required as a cofactor.

It participates in secondary metabolite biosynthesis. Functionally, monooxygenase; part of the gene cluster that mediates the biosynthesis of the indole diterpenes penitrems. The geranylgeranyl diphosphate (GGPP) synthase ptmG catalyzes the first step in penitrem biosynthesis via conversion of farnesyl pyrophosphate and isopentyl pyrophosphate into geranylgeranyl pyrophosphate (GGPP). Condensation of indole-3-glycerol phosphate with GGPP by the prenyl transferase ptmC then forms 3-geranylgeranylindole (3-GGI). Epoxidation by the FAD-dependent monooxygenase ptmM leads to a epoxidized-GGI that is substrate of the terpene cyclase ptmB for cyclization to yield paspaline. Paspaline is subsequently converted to 13-desoxypaxilline by the cytochrome P450 monooxygenase ptmP, the latter being then converted to paxilline by the cytochrome P450 monooxygenase ptmQ. Paxilline is converted to beta-paxitriol via C-10 ketoreduction by the short-chain dehydrogenase ptmH which can be monoprenylated at the C-20 by the indole diterpene prenyltransferase ptmD. A two-step elimination (acetylation and elimination) process performed by the O-acetyltransferase ptmV and ptmI leads to the production of the prenylated form of penijanthine. The FAD-linked oxidoreductase ptmO then converts the prenylated form of penijanthine into PC-M5 which is in turn transformed into PC-M4 by the aromatic dimethylallyltransferase ptmE. Five sequential oxidative transformations performed by the cytochrome P450 monooxygenases ptmK, ptmU, ptmL, ptmN and ptmJ yield the various penitrem compounds. PtmK, ptmU and ptmM are involved in the formation of the key bicyclic ring of penitrem C via the formation of the intermediates secopenitrem D and penitrem D. PtmL catalyzes the epoxidation of penitrem D and C to yield penitrem B and F, respectively. PtmJ catalyzes the last benzylic hydroxylation to convert penitrem B to prenitrem E and penitrem F to penitrem A. The protein is Monooxygenase ptmN of Penicillium ochrochloron.